The following is a 98-amino-acid chain: Cuticle protein 67, isoform A (98 aa).

6 consecutive repeat copies span residues 7 to 10 (AAPA), 15 to 18 (AAPA), 22 to 25 (AAPA), 79 to 82 (AAPA), 86 to 89 (AAPA), and 92 to 95 (AAPA).

In terms of biological role, component of the cuticle of migratory locust which contains more than 100 different structural proteins. In Locusta migratoria (Migratory locust), this protein is Cuticle protein 67, isoform A.